Here is a 2896-residue protein sequence, read N- to C-terminus: Hemocyanin G-type, units Oda to Odg (2896 aa).

The functional unit Oda stretch occupies residues 1 to 419 (NLIRKDVDAL…ADMVVVDKTG (419 aa)). H41 lines the Cu cation pocket. Residues C47 and C57 are joined by a disulfide bond. The 2'-(S-cysteinyl)-histidine (Cys-His) cross-link spans 58-60 (CLH). Residues H60, H69, H178, H182, and H209 each contribute to the Cu cation site. Cystine bridges form between C168–C234 and C321–C333. N-linked (GlcNAc...) asparagine glycosylation occurs at N386. Positions 420 to 834 (LNVRKDLQSL…KESGVVFDEL (415 aa)) are functional unit Odb. A Cu cation-binding site is contributed by H460. An intrachain disulfide couples C466 to C477. Residues 478–480 (CVH) constitute a cross-link (2'-(S-cysteinyl)-histidine (Cys-His)). Residues H480, H489, H601, H605, and H632 each contribute to the Cu cation site. Residues C591 and C657 are joined by a disulfide bond. N804 is a glycosylation site (N-linked (GlcNAc...) asparagine). Residues 835-1254 (YRSRRDVSSL…GIWVEPVTSA (420 aa)) form a functional unit Odc region. H875 contributes to the Cu cation binding site. C881 and C892 are disulfide-bonded. Residues 893–895 (CHH) constitute a cross-link (2'-(S-cysteinyl)-histidine (Cys-His)). Cu cation-binding residues include H895, H904, H1013, H1017, H1044, and H1292. C1003 and C1070 are oxidised to a cystine. Positions 1255–1667 (NRIRKNLNAL…ADIKSEEGNE (413 aa)) are functional unit Odd. The cysteines at positions 1298 and 1309 are disulfide-linked. The segment at residues 1310–1312 (CIH) is a cross-link (2'-(S-cysteinyl)-histidine (Cys-His)). Residues H1312, H1321, H1425, H1429, and H1456 each coordinate Cu cation. C1415 and C1482 are disulfide-bonded. N-linked (GlcNAc...) asparagine glycosylation occurs at N1496. A disulfide bond links C1571 and C1581. Residue N1634 is glycosylated (N-linked (GlcNAc...) asparagine). Positions 1668–2085 (YLVRKNVERL…NEDADIDTPL (418 aa)) are functional unit Ode. Position 1708 (H1708) interacts with Cu cation. C1714 and C1725 are joined by a disulfide. Residues 1726–1728 (CLH) constitute a cross-link (2'-(S-cysteinyl)-histidine (Cys-His)). Residues H1728, H1737, H1849, H1853, and H1880 each coordinate Cu cation. Cystine bridges form between C1839/C1906 and C1997/C2003. N-linked (GlcNAc...) asparagine glycosylation occurs at N2055. Residues 2086 to 2502 (NHIRRNVESL…REVHKKTVGD (417 aa)) form a functional unit Odf region. Residue H2126 coordinates Cu cation. An intrachain disulfide couples C2131 to C2141. A cross-link (2'-(S-cysteinyl)-histidine (Cys-His)) is located at residues 2142–2144 (CLH). 2 residues coordinate Cu cation: H2144 and H2153. N2201 is a glycosylation site (N-linked (GlcNAc...) asparagine). 2 cysteine pairs are disulfide-bonded: C2252–C2319 and C2406–C2411. Residues H2262, H2266, and H2293 each coordinate Cu cation. The segment at 2503–2896 (AIIRKNVNSL…VFLAPAKTTH (394 aa)) is functional unit Odg. Residue H2543 participates in Cu cation binding. A disulfide bridge links C2549 with C2559. Residue N2553 is glycosylated (N-linked (GlcNAc...) asparagine). The segment at residues 2560–2562 (CQH) is a cross-link (2'-(S-cysteinyl)-histidine (Cys-His)). Cu cation is bound by residues H2562, H2571, H2671, H2675, and H2702. 2 disulfides stabilise this stretch: C2661–C2728 and C2815–C2821.

The protein belongs to the tyrosinase family. Hemocyanin subfamily. Decamers of large identical subunits (350 kDa), each containing 7 globular oxygen-binding functional units: ODA, ODB, ODC, ODD, ODE, ODF, and ODG. Decamer formation requires the presence of magnesium ions. It depends on Cu(2+) as a cofactor.

Hemocyanins are copper-containing oxygen carriers occurring freely dissolved in the hemolymph of many mollusks and arthropods. This is Hemocyanin G-type, units Oda to Odg (ODHCY) from Enteroctopus dofleini (North Pacific giant octopus).